The primary structure comprises 525 residues: Glutamate--cysteine ligase (525 aa).

It belongs to the glutamate--cysteine ligase type 1 family. Type 1 subfamily.

The catalysed reaction is L-cysteine + L-glutamate + ATP = gamma-L-glutamyl-L-cysteine + ADP + phosphate + H(+). It participates in sulfur metabolism; glutathione biosynthesis; glutathione from L-cysteine and L-glutamate: step 1/2. This is Glutamate--cysteine ligase from Pseudomonas putida (strain W619).